Consider the following 197-residue polypeptide: 7-methyl-GTP pyrophosphatase (197 aa).

Residue D79 is the Proton acceptor of the active site.

This sequence belongs to the Maf family. YceF subfamily.

It is found in the cytoplasm. The enzyme catalyses N(7)-methyl-GTP + H2O = N(7)-methyl-GMP + diphosphate + H(+). Its function is as follows. Nucleoside triphosphate pyrophosphatase that hydrolyzes 7-methyl-GTP (m(7)GTP). May have a dual role in cell division arrest and in preventing the incorporation of modified nucleotides into cellular nucleic acids. In Dictyostelium discoideum (Social amoeba), this protein is 7-methyl-GTP pyrophosphatase.